Reading from the N-terminus, the 565-residue chain is Proline--tRNA ligase (565 aa).

Belongs to the class-II aminoacyl-tRNA synthetase family. ProS type 1 subfamily. Homodimer.

Its subcellular location is the cytoplasm. The enzyme catalyses tRNA(Pro) + L-proline + ATP = L-prolyl-tRNA(Pro) + AMP + diphosphate. Its function is as follows. Catalyzes the attachment of proline to tRNA(Pro) in a two-step reaction: proline is first activated by ATP to form Pro-AMP and then transferred to the acceptor end of tRNA(Pro). As ProRS can inadvertently accommodate and process non-cognate amino acids such as alanine and cysteine, to avoid such errors it has two additional distinct editing activities against alanine. One activity is designated as 'pretransfer' editing and involves the tRNA(Pro)-independent hydrolysis of activated Ala-AMP. The other activity is designated 'posttransfer' editing and involves deacylation of mischarged Ala-tRNA(Pro). The misacylated Cys-tRNA(Pro) is not edited by ProRS. The protein is Proline--tRNA ligase of Campylobacter lari (strain RM2100 / D67 / ATCC BAA-1060).